Reading from the N-terminus, the 1322-residue chain is MFPMQFTNSAYRQMEPMFAPASRGQVQPYRPRTKRRQEPQVGNAAIAALANQMSALQLQVAGLAGQARVDRRGPRRVQKNKQKKKNSSNGEKPKEKKKKQKQQEKKGSGGEKAKKPRNRPGKEVRISVKRARQSTFPVYHDGAISGYAVLIGSRVFKPAHVKGKFDHPELADIKFQVAEVMDLEAAAYPKCMRDQAAEPATMMDGVYNGEYGNIQEWRTILYSMRAAEASRGDSGRPFTDNSGKVVGIVLGGGPDGRRTRLSVIGFDKKLKAREIAYSEAIPWTRAPALLLLPMVIACTYNSNTFDCSKPSCQDCCITAEPKKAMTMLKDNLNDPNYWDLLIAVTTCSSARKKRAVSTSPVAVYDTQILAAHAAASPYRAYCPDCDGTACISPIAIDEVVSSGSDHVLRIRVGSQSGVTAKGGAAGETSLRYLGRDGKVYAADNTRLVVRTTAKCDVLQATGHYILANCPVGQSLTVAATLDGTRHQCTTVFEHQVTEKFTRERSKGHHLSDLTKKCTRFSTTPKKSALYLVDVYDALPTSVEISTVVTCNERQCTVRVPPGTTVKFDKRCKNAAKETVTFTSDSQTFTCEEPVLTAASITQGKPHLRSSMLPSGGKEVKARIPFPFPPETATCRVSIAPLPSITYEESDVLLAGTAKYPVLLTTRNLGFHSNATSEWIQGKYLRRIPVTPQGIELMLGNNAPLHFWSSVRYASGDADAYPWELLVHHIKHHPEYAWAFVGVACGLLAVAACMFACACNRVRYSLLANTFNPNPPPLTALTAALCCIPGARADQPYLDIIAYLWTNSKVAFGLQCAAPVACMLIVTYALRHCRLCCNSFLGVRGWSALLVILAYVQSCKAYEHTVVVPMDPRAPSYEAVINRNGYDPLKLTIAVNFTVISPTTALEYWTCAGVPVVEPPHVGCCTSVSCPSDLSTLHAFTGKAVSDVHCDVHTNVYPLLWGAAHCFCSTENTQVSAVAATVSEFCAQDSERAEAFSVHSSSVTAEILVTLGEVVTAVHVYVDGVTSARGTDLKIVAGPITTDYSPFDRKVVRIGEEVYNYDWPPYGAGRPGTFGDIQARSTNYVKPNDLYGDIGIEVLQPTNDHVHVAYTYTTSGLLRWLQDAPKPLSVTAPHGCKISANPLLALDCGVGAVPMSINIPDAKFTRKLKDPKPSALKCVVDSCEYGVDYGGAATITYEGHEAGKCGIHSLTPGVPLRTSVVEVVAGANTVKTTFSSPTPEVTLEVEICSAIVKCASECTPPKEHVVAARPRHGSDTGGYISGPAMRWAGRIVGNPSGPVSSSLAVTYCVVKKCRSKRIRIVKS.

Disordered regions lie at residues 18 to 41 and 61 to 128; these read FAPASRGQVQPYRPRTKRRQEPQV and AGLA…RISV. The interval 48–81 is host transcription inhibition; the sequence is ALANQMSALQLQVAGLAGQARVDRRGPRRVQKNK. A compositionally biased stretch (basic residues) spans 73–86; the sequence is GPRRVQKNKQKKKN. The short motif at 74-120 is the Nuclear localization signal element; it reads PRRVQKNKQKKKNSSNGEKPKEKKKKQKQQEKKGSGGEKAKKPRNRP. Basic and acidic residues predominate over residues 101–113; that stretch reads KQQEKKGSGGEKA. Residues 101-135 form a binding to the viral RNA region; that stretch reads KQQEKKGSGGEKAKKPRNRPGKEVRISVKRARQST. Residues 120-134 form a ribosome-binding region; it reads PGKEVRISVKRARQS. The Peptidase S3 domain maps to 134–283; it reads STFPVYHDGA…EIAYSEAIPW (150 aa). The Charge relay system role is filled by H160. A Nuclear export signal motif is present at residues 165–175; that stretch reads FDHPELADIKF. Residue D182 is the Charge relay system of the active site. The interval 203–213 is dimerization of the capsid protein; sequence MDGVYNGEYGN. The Charge relay system role is filled by S234. The interval 240 to 244 is dimerization of the capsid protein; it reads DNSGK. Positions 284–303 are functions as an uncleaved signal peptide for the precursor of protein E3/E2; sequence TRAPALLLLPMVIACTYNSN. Cystine bridges form between C298–C307, C382–C488, C385–C390, C455–C469, and C517–C634. Residues 355–735 are Extracellular-facing; the sequence is AVSTSPVAVY…VHHIKHHPEY (381 aa). A helical transmembrane segment spans residues 736 to 756; sequence AWAFVGVACGLLAVAACMFAC. Topologically, residues 757-792 are cytoplasmic; sequence ACNRVRYSLLANTFNPNPPPLTALTAALCCIPGARA. The tract at residues 761–785 is transient transmembrane before p62-6K protein processing; it reads VRYSLLANTFNPNPPPLTALTAALC. 2 S-palmitoyl cysteine; by host lipidation sites follow: C785 and C786. The Extracellular portion of the chain corresponds to 793-808; it reads DQPYLDIIAYLWTNSK. Residues 809 to 829 traverse the membrane as a helical segment; the sequence is VAFGLQCAAPVACMLIVTYAL. Residues 830–834 are Cytoplasmic-facing; it reads RHCRL. A helical transmembrane segment spans residues 835–855; the sequence is CCNSFLGVRGWSALLVILAYV. Residues 856–1287 are Extracellular-facing; sequence QSCKAYEHTV…YISGPAMRWA (432 aa). Cystine bridges form between C910–C985, C923–C965, C924–C967, C929–C949, C1135–C1147, C1177–C1253, C1182–C1257, and C1204–C1247. Residues 955–972 are E1 fusion peptide loop; that stretch reads VYPLLWGAAHCFCSTENT. A helical transmembrane segment spans residues 1288–1309; sequence GRIVGNPSGPVSSSLAVTYCVV. Residues 1310-1322 lie on the Cytoplasmic side of the membrane; the sequence is KKCRSKRIRIVKS. Residue C1312 is the site of S-stearoyl cysteine; by host attachment.

As to quaternary structure, homodimer. Homomultimer. Interacts with host karyopherin KPNA4; this interaction allows the nuclear import of the viral capsid protein. Interacts with spike glycoprotein E2. Interacts with host IRAK1; the interaction leads to inhibition of IRAK1-dependent signaling. The precursor of protein E3/E2 and E1 form a heterodimer shortly after synthesis. In terms of assembly, interacts with spike glycoprotein E2. The precursor of protein E3/E2 and E1 form a heterodimer shortly after synthesis. Processing of the precursor of protein E3/E2 into E2 and E3 results in a heterodimer of the spike glycoproteins E2 and E1. Spike at virion surface are constituted of three E2-E1 heterodimers. After target cell attachment and endocytosis, E1 change conformation to form homotrimers. Interacts with 6K protein. As to quaternary structure, interacts with spike glycoprotein E1. Processing of the precursor of protein E3/E2 into E2 and E3 results in a heterodimer of the spike glycoproteins E2 and E1. Spike at virion surface are constituted of a trimer of E2-E1 heterodimers. Interacts with 6K protein. Oligomer. Interacts with spike glycoprotein E1. Interacts with spike glycoprotein E2. In terms of processing, structural polyprotein: Specific enzymatic cleavages in vivo yield mature proteins. Capsid protein is auto-cleaved during polyprotein translation, unmasking a signal peptide at the N-terminus of the precursor of E3/E2. The remaining polyprotein is then targeted to the host endoplasmic reticulum, where host signal peptidase cleaves it into pE2, 6K and E1 proteins. pE2 is further processed to mature E3 and E2 by host furin in trans-Golgi vesicle. Palmitoylated via thioester bonds. These palmitoylations may induce disruption of the C-terminus transmembrane. This would result in the reorientation of E2 C-terminus from lumenal to cytoplasmic side. Post-translationally, N-glycosylated. In terms of processing, palmitoylated via thioester bonds.

It localises to the virion. The protein localises to the host cytoplasm. It is found in the host cell membrane. Its subcellular location is the host nucleus. The protein resides in the virion membrane. It localises to the host Golgi apparatus. The protein localises to the host trans-Golgi network. It is found in the host endoplasmic reticulum. It catalyses the reaction Autocatalytic release of the core protein from the N-terminus of the togavirus structural polyprotein by hydrolysis of a -Trp-|-Ser- bond.. In terms of biological role, forms an icosahedral capsid with a T=4 symmetry composed of 240 copies of the capsid protein surrounded by a lipid membrane through which penetrate 80 spikes composed of trimers of E1-E2 heterodimers. The capsid protein binds to the viral RNA genome at a site adjacent to a ribosome binding site for viral genome translation following genome release. Possesses a protease activity that results in its autocatalytic cleavage from the nascent structural protein. Following its self-cleavage, the capsid protein transiently associates with ribosomes, and within several minutes the protein binds to viral RNA and rapidly assembles into icosahedric core particles. The resulting nucleocapsid eventually associates with the cytoplasmic domain of the spike glycoprotein E2 at the cell membrane, leading to budding and formation of mature virions. In case of infection, new virions attach to target cells and after clathrin-mediated endocytosis their membrane fuses with the host endosomal membrane. This leads to the release of the nucleocapsid into the cytoplasm, followed by an uncoating event necessary for the genomic RNA to become accessible. The uncoating might be triggered by the interaction of capsid proteins with ribosomes. Binding of ribosomes would release the genomic RNA since the same region is genomic RNA-binding and ribosome-binding. Specifically inhibits interleukin-1 receptor-associated kinase 1/IRAK1-dependent signaling during viral entry, representing a means by which the alphaviruses may evade innate immune detection and activation prior to viral gene expression. Functionally, provides the signal sequence for the translocation of the precursor of protein E3/E2 to the host endoplasmic reticulum. Furin-cleaved E3 remains associated with spike glycoprotein E1 and mediates pH protection of the latter during the transport via the secretory pathway. After virion release from the host cell, the assembly protein E3 is gradually released in the extracellular space. Its function is as follows. Plays a role in viral attachment to target host cell, by binding to the cell receptor. Synthesized as a p62 precursor which is processed by furin at the cell membrane just before virion budding, giving rise to E2-E1 heterodimer. The p62-E1 heterodimer is stable, whereas E2-E1 is unstable and dissociate at low pH. p62 is processed at the last step, presumably to avoid E1 fusion activation before its final export to cell surface. E2 C-terminus contains a transitory transmembrane that would be disrupted by palmitoylation, resulting in reorientation of the C-terminal tail from lumenal to cytoplasmic side. This step is critical since E2 C-terminus is involved in budding by interacting with capsid proteins. This release of E2 C-terminus in cytoplasm occurs lately in protein export, and precludes premature assembly of particles at the endoplasmic reticulum membrane. Acts as a viroporin that participates in virus glycoprotein processing and transport to the plasma membrane, cell permeabilization and budding of viral particles. Disrupts the calcium homeostasis of the cell, probably at the endoplasmic reticulum level. This leads to cytoplasmic calcium elevation. Because of its lipophilic properties, the 6K protein is postulated to influence the selection of lipids that interact with the transmembrane domains of the glycoproteins, which, in turn, affects the deformability of the bilayer required for the extreme curvature that occurs as budding proceeds. Present in low amount in virions, about 3% compared to viral glycoproteins. In terms of biological role, class II viral fusion protein. Fusion activity is inactive as long as E1 is bound to E2 in mature virion. After virus attachment to target cell and endocytosis, acidification of the endosome induce dissociation of E1/E2 heterodimer and concomitant trimerization of the E1 subunits. This E1 trimer is fusion active, and promotes release of viral nucleocapsid in cytoplasm after endosome and viral membrane fusion. Efficient fusion requires the presence of cholesterol and sphingolipid in the target membrane. This chain is Structural polyprotein, found in Oncorhynchus mykiss (Rainbow trout).